The sequence spans 29 residues: GICPRILMECKRDSDCLAQCVCKRQGYCG.

Intrachain disulfides connect Cys-3–Cys-20, Cys-10–Cys-22, and Cys-16–Cys-28.

This sequence belongs to the protease inhibitor I7 (squash-type serine protease inhibitor) family.

It localises to the secreted. In terms of biological role, inhibits trypsin. The protein is Trypsin inhibitor 1 of Momordica repens.